The chain runs to 662 residues: Acetyl-coenzyme A synthetase (662 aa).

CoA is bound by residues 197–200 (RKGK) and Thr317. ATP is bound by residues 393-395 (GEP), 417-422 (DTWWQT), Asp510, and Arg525. Ser533 serves as a coordination point for CoA. Residue Arg536 coordinates ATP. Mg(2+) is bound by residues His549 and Val552. N6-acetyllysine is present on Lys623.

It belongs to the ATP-dependent AMP-binding enzyme family. The cofactor is Mg(2+). In terms of processing, acetylated. Deacetylation by the SIR2-homolog deacetylase activates the enzyme.

The catalysed reaction is acetate + ATP + CoA = acetyl-CoA + AMP + diphosphate. Functionally, catalyzes the conversion of acetate into acetyl-CoA (AcCoA), an essential intermediate at the junction of anabolic and catabolic pathways. AcsA undergoes a two-step reaction. In the first half reaction, AcsA combines acetate with ATP to form acetyl-adenylate (AcAMP) intermediate. In the second half reaction, it can then transfer the acetyl group from AcAMP to the sulfhydryl group of CoA, forming the product AcCoA. The polypeptide is Acetyl-coenzyme A synthetase (Helicobacter acinonychis (strain Sheeba)).